We begin with the raw amino-acid sequence, 423 residues long: Adenylosuccinate synthetase (423 aa).

The active-site Proton acceptor is Asp12. Mg(2+) is bound by residues Asp12 and Gly39. IMP is bound by residues 37-40, Thr129, Arg143, Asn221, Thr236, and Arg300; that span reads NAGH. Position 39–41 (39–41) interacts with GTP; the sequence is GHS. His40 serves as the catalytic Proton donor. A substrate-binding site is contributed by 296–302; the sequence is VSTGRKR. GTP-binding positions include Arg302, 328 to 330, and 412 to 414; these read KLD and GTG.

This sequence belongs to the adenylosuccinate synthetase family. Homodimer. Requires Mg(2+) as cofactor.

It localises to the cytoplasm. It carries out the reaction IMP + L-aspartate + GTP = N(6)-(1,2-dicarboxyethyl)-AMP + GDP + phosphate + 2 H(+). The protein operates within purine metabolism; AMP biosynthesis via de novo pathway; AMP from IMP: step 1/2. Plays an important role in the de novo pathway and in the salvage pathway of purine nucleotide biosynthesis. Catalyzes the first committed step in the biosynthesis of AMP from IMP. The sequence is that of Adenylosuccinate synthetase from Pyricularia oryzae (strain 70-15 / ATCC MYA-4617 / FGSC 8958) (Rice blast fungus).